The sequence spans 524 residues: MLKIDMWFKLKSLGFSLISLQALLASCSAVSPVPVPIEEKNDSTTDNNATPFKDEQSDQGTEVNQQPKVEQKVYNRNFKFNTSFIPEESDIYRKGYDLTFTLNFTSFSNDSYGTGWLIDWKGDENTTQKQGSFFAYIATNLHVADGLRNIGDHWPYSKTDDQREFNEYESTVYFSIGKYTNKTDITKLYQEEKLEQRKVNDSLLSIQTSNIPKTAYTATNFLKGVNSIKPVYADFAVIELELNLENLRDWQIFNEFIKPAINTYKSLGDSTNIFETKDLEQHWNHSHYLLGYPVLERGYDQNRLLEQKEEFARTHNFNQKSQLWSKNTYLVSTAKEIPVITKNARKDGQIGSEIFSKKTQDSHVDKVIKHEKGIVTFQNFKNFKLKYHDKEYQQYGYGLMLDDTNLPGGSSGSAIFNNNQKINSIYFGVLEVYKNSKTHKDNIGMSQLLRTSKRESEKNKTRTTNNRDKFQHYDLIFGDSNTKSFYAQFAKKHNTHLYDQIKSSEKEEFKYVDKNNQKTPFLLR.

Positions 1 to 26 (MLKIDMWFKLKSLGFSLISLQALLAS) are cleaved as a signal peptide. The N-palmitoyl cysteine moiety is linked to residue Cys27. A lipid anchor (S-diacylglycerol cysteine) is attached at Cys27. Residues 37–68 (IEEKNDSTTDNNATPFKDEQSDQGTEVNQQPK) are disordered. A compositionally biased stretch (polar residues) spans 58 to 68 (DQGTEVNQQPK).

The protein belongs to the MG067/MG068/MG395 family.

The protein localises to the cell membrane. This is an uncharacterized protein from Mycoplasma genitalium (strain ATCC 33530 / DSM 19775 / NCTC 10195 / G37) (Mycoplasmoides genitalium).